We begin with the raw amino-acid sequence, 101 residues long: CYC02 protein (101 aa).

The stretch at 42–64 (DAVCHHGCCRWFHHRCVRCCRSA) is one 1; approximate repeat. Residues 42–101 (DAVCHHGCCRWFHHRCVRCCRSAEEVSVSDTENNAAADAHCRHGCCRWFHGRCIRCCPSA) are 2 X approximate repeats. The 2; approximate repeat unit spans residues 79–101 (DAHCRHGCCRWFHGRCIRCCPSA).

The protein belongs to the GRP family.

In terms of biological role, may be involved in the control of the cell cycle at the G1/S start transition. The chain is CYC02 protein (CYC02) from Catharanthus roseus (Madagascar periwinkle).